A 331-amino-acid polypeptide reads, in one-letter code: Pseudouridylate synthase TRUB2, mitochondrial (331 aa).

Residues 1–10 constitute a mitochondrion transit peptide; that stretch reads MGSAGLSRLH. Catalysis depends on Asp98, which acts as the Nucleophile. The segment at 296 to 331 is disordered; it reads KSLSPGLDTKQLPSPGWSWDSQGPSSTLGLERGAGQ. Polar residues predominate over residues 314–323; the sequence is WDSQGPSSTL.

It belongs to the pseudouridine synthase TruB family. Forms a regulatory protein-RNA complex, consisting of RCC1L, NGRN, RPUSD3, RPUSD4, TRUB2, FASTKD2 and 16S mt-rRNA.

The protein resides in the mitochondrion matrix. The catalysed reaction is a uridine in mRNA = a pseudouridine in mRNA. It catalyses the reaction uridine(55) in tRNA = pseudouridine(55) in tRNA. In terms of biological role, minor enzyme contributing to the isomerization of uridine to pseudouridine (pseudouridylation) of specific mitochondrial mRNAs (mt-mRNAs) such as COXI and COXIII mt-mRNAs. As a component of a functional protein-RNA module, consisting of RCC1L, NGRN, RPUSD3, RPUSD4, TRUB2, FASTKD2 and 16S mitochondrial ribosomal RNA (16S mt-rRNA), controls 16S mt-rRNA abundance and is required for intra-mitochondrial translation. Also catalyzes pseudouridylation of some tRNAs, including synthesis of pseudouridine(55) from uracil-55, in the psi GC loop of a subset of tRNAs. The chain is Pseudouridylate synthase TRUB2, mitochondrial from Homo sapiens (Human).